Here is a 251-residue protein sequence, read N- to C-terminus: 2-amino-5-chloromuconate deaminase (251 aa).

As to quaternary structure, monomer.

It carries out the reaction (2Z,4E)-2-aminomuconate + H2O = (2Z,4E)-2-hydroxyhexa-2,4-dienedioate + NH4(+). The protein operates within xenobiotic degradation; 4-chloronitrobenzene degradation. Its pathway is xenobiotic degradation; nitrobenzene degradation. With respect to regulation, cysteine residue modifying agents such as p-chloromercuribenzoate and the SH-binding metals Zn(2+), Ni(2+) and Cu(2+) completely inhibit deaminase activity, whereas Ca(2+), Mg(2+) and the histidine residue-modifying agent diethyl pyrocarbonate inhibit the activity by 23 to 50%. Functionally, involved in the biodegradation of xenobiotic compounds, such as nitrobenzene and 4-chloronitrobenzene (4-CNB). CnbZ preferentially catalyzes the deamination of 2-amino-5-chloromuconate (2A5CM) to yield 2-hydroxy-5-chloromuconate (2H5CM). Also able to catalyze the deamination of 2-aminomuconate to yield 2-hydroxymuconate, which spontaneously converts into its keto form, 2-oxalocrotonate. In Comamonas testosteroni (Pseudomonas testosteroni), this protein is 2-amino-5-chloromuconate deaminase.